The sequence spans 92 residues: RQC P-site tRNA stabilizing factor (92 aa).

The 61-residue stretch at 5-65 folds into the S4 RNA-binding domain; sequence MRLDKYLKVS…GPKIVTAKIE (61 aa).

The protein belongs to the RqcP family. As to quaternary structure, associates with stalled 50S ribosomal subunits. Binds to RqcH, 23S rRNA and the P-site tRNA. Does not require RqcH for association with 50S subunits.

In terms of biological role, key component of the ribosome quality control system (RQC), a ribosome-associated complex that mediates the extraction of incompletely synthesized nascent chains from stalled ribosomes and their subsequent degradation. RqcH recruits Ala-charged tRNA, and with RqcP directs the elongation of stalled nascent chains on 50S ribosomal subunits, leading to non-templated C-terminal alanine extensions (Ala tail). The Ala tail promotes nascent chain degradation. RqcP is associated with the translocation-like movement of the peptidyl-tRNA from the A-site into the P-site. The sequence is that of RQC P-site tRNA stabilizing factor from Listeria monocytogenes serovar 1/2a (strain ATCC BAA-679 / EGD-e).